The following is a 287-amino-acid chain: Formamidopyrimidine-DNA glycosylase (287 aa).

The Schiff-base intermediate with DNA role is filled by proline 2. Catalysis depends on glutamate 3, which acts as the Proton donor. Lysine 58 (proton donor; for beta-elimination activity) is an active-site residue. Positions 104, 123, and 166 each coordinate DNA. An FPG-type zinc finger spans residues 251-287; it reads RVYDREGQPCPTPGCKGMIGREVQAGRSTFFCPVCQV. Arginine 277 functions as the Proton donor; for delta-elimination activity in the catalytic mechanism.

The protein belongs to the FPG family. In terms of assembly, monomer. Zn(2+) is required as a cofactor.

The enzyme catalyses Hydrolysis of DNA containing ring-opened 7-methylguanine residues, releasing 2,6-diamino-4-hydroxy-5-(N-methyl)formamidopyrimidine.. The catalysed reaction is 2'-deoxyribonucleotide-(2'-deoxyribose 5'-phosphate)-2'-deoxyribonucleotide-DNA = a 3'-end 2'-deoxyribonucleotide-(2,3-dehydro-2,3-deoxyribose 5'-phosphate)-DNA + a 5'-end 5'-phospho-2'-deoxyribonucleoside-DNA + H(+). Its function is as follows. Involved in base excision repair of DNA damaged by oxidation or by mutagenic agents. Acts as a DNA glycosylase that recognizes and removes damaged bases. Has a preference for oxidized purines, such as 7,8-dihydro-8-oxoguanine (8-oxoG). Has AP (apurinic/apyrimidinic) lyase activity and introduces nicks in the DNA strand. Cleaves the DNA backbone by beta-delta elimination to generate a single-strand break at the site of the removed base with both 3'- and 5'-phosphates. The protein is Formamidopyrimidine-DNA glycosylase of Caulobacter sp. (strain K31).